Here is a 228-residue protein sequence, read N- to C-terminus: Superoxide dismutase [Mn], mitochondrial (228 aa).

The transit peptide at 1–24 directs the protein to the mitochondrion; the sequence is MALRTLVSRRTLATGLGFRQQLRG. Residues His-52, His-100, Asp-189, and His-193 each coordinate Mn(2+).

The protein belongs to the iron/manganese superoxide dismutase family. As to quaternary structure, homotetramer. The cofactor is Mn(2+).

The protein resides in the mitochondrion matrix. It catalyses the reaction 2 superoxide + 2 H(+) = H2O2 + O2. Its function is as follows. Destroys superoxide anion radicals which are normally produced within the cells and which are toxic to biological systems. This Nicotiana plumbaginifolia (Leadwort-leaved tobacco) protein is Superoxide dismutase [Mn], mitochondrial (SODA).